Consider the following 61-residue polypeptide: Defensin-like peptide TXKs2 (61 aa).

Residues 1 to 19 (MTYAILIIVSLLLISDRIS) form the signal peptide. Residues 20-22 (NVV) constitute a propeptide that is removed on maturation. 3 disulfide bridges follow: Cys26-Cys47, Cys33-Cys56, and Cys37-Cys58.

This sequence belongs to the invertebrate defensin family. In terms of tissue distribution, expressed by the venom gland.

It is found in the secreted. Its function is as follows. Antibacterial protein. The sequence is that of Defensin-like peptide TXKs2 from Olivierus martensii (Manchurian scorpion).